Here is a 271-residue protein sequence, read N- to C-terminus: 4-hydroxy-tetrahydrodipicolinate reductase (271 aa).

NAD(+) contacts are provided by residues 10 to 15, Glu36, 100 to 102, and 124 to 127; these read GAGGRM, GTT, and SGNM. His157 serves as the catalytic Proton donor/acceptor. Residue His158 coordinates (S)-2,3,4,5-tetrahydrodipicolinate. The active-site Proton donor is Lys161. A (S)-2,3,4,5-tetrahydrodipicolinate-binding site is contributed by 167–168; the sequence is GT.

This sequence belongs to the DapB family.

The protein localises to the cytoplasm. It catalyses the reaction (S)-2,3,4,5-tetrahydrodipicolinate + NAD(+) + H2O = (2S,4S)-4-hydroxy-2,3,4,5-tetrahydrodipicolinate + NADH + H(+). The enzyme catalyses (S)-2,3,4,5-tetrahydrodipicolinate + NADP(+) + H2O = (2S,4S)-4-hydroxy-2,3,4,5-tetrahydrodipicolinate + NADPH + H(+). It functions in the pathway amino-acid biosynthesis; L-lysine biosynthesis via DAP pathway; (S)-tetrahydrodipicolinate from L-aspartate: step 4/4. Functionally, catalyzes the conversion of 4-hydroxy-tetrahydrodipicolinate (HTPA) to tetrahydrodipicolinate. In Rhodopseudomonas palustris (strain HaA2), this protein is 4-hydroxy-tetrahydrodipicolinate reductase.